The sequence spans 666 residues: SNARE-interacting protein KEULE (666 aa).

Positions 340 to 377 (KNKAAQLQGKRDGAELSTRDLQKMVQALPQYSEQIDKL) form a coiled coil. Residues 534-589 (KEDFPCMNDPSPSFHGSTSLSSAASSSQGQAAQSMRSRRTPTWAKPRGSDDGYSSD) are disordered. Low complexity predominate over residues 550-568 (STSLSSAASSSQGQAAQSM).

This sequence belongs to the STXBP/unc-18/SEC1 family. Binds the syntaxin KNOLLE. Interacts with SEC6. As to expression, expressed throughout the plant, both in mitotically active and quiescent cells. Enriched in dividing tissues.

It localises to the cytoplasm. The protein localises to the membrane. It is found in the cytoskeleton. The protein resides in the phragmoplast. Its function is as follows. Regulator of vesicle trafficking involved in cytokinesis and root hair development, but not required for cell elongation. This is SNARE-interacting protein KEULE (KEU) from Arabidopsis thaliana (Mouse-ear cress).